A 322-amino-acid chain; its full sequence is Putative DNA-directed RNA polymerase subunit alpha-like 2 (322 aa).

The segment at 1–232 (MSNPNNGAEW…GLLSLVFQAE (232 aa)) is alpha N-terminal domain (alpha-NTD). The tract at residues 280–322 (EGPVTDEEGDSIDPTFTPVQKWDITMNSYQYSGETFQGLLSRF) is alpha C-terminal domain (alpha-CTD).

It belongs to the RNA polymerase alpha chain family. In plastids the minimal PEP RNA polymerase catalytic core is composed of four subunits: alpha, beta, beta', and beta''. When a (nuclear-encoded) sigma factor is associated with the core the holoenzyme is formed, which can initiate transcription.

It is found in the plastid. The protein resides in the chloroplast. The catalysed reaction is RNA(n) + a ribonucleoside 5'-triphosphate = RNA(n+1) + diphosphate. In terms of biological role, DNA-dependent RNA polymerase catalyzes the transcription of DNA into RNA using the four ribonucleoside triphosphates as substrates. The chain is Putative DNA-directed RNA polymerase subunit alpha-like 2 (rpoAL2-A) from Pelargonium hortorum (Common geranium).